Here is a 486-residue protein sequence, read N- to C-terminus: Hematopoietic lineage cell-specific protein (486 aa).

The tract at residues 27–66 (FVNDISEKEQRWGAKTIEGSGRTEHINIHQLRNKVSEEHD) is involved in HAX-1 binding. Lys-41 carries the N6-acetyllysine modification. Cortactin repeat units lie at residues 79–115 (ASHGYGGRFGVERDRMDKSAVGHEYVADVEKHSSQTD), 116–152 (AARGFGGKYGVERDRADKSAVGFDYKGEVEKHASQKD), and 153–189 (YSHGFGGRYGVEKDKRDKAALGYDYKGETEKHESQRD). At Lys-123 the chain carries N6-acetyllysine. Residue Tyr-140 is modified to Phosphotyrosine. One copy of the Cortactin 4; truncated repeat lies at 190–212 (YAKGFGGQYGIQKDRVDKSAVGF). Lys-192 carries the post-translational modification N6-acetyllysine. Position 198 is a phosphotyrosine (Tyr-198). Tyr-222 is modified (phosphotyrosine; by FGR). The tract at residues 226–430 (TPIEAASSGA…AGPSAGAGGA (205 aa)) is disordered. Basic and acidic residues-rich tracts occupy residues 240–258 (AKFESLAEEKRKREEEEKA) and 265–276 (QQERKAVVKMSR). An N6-acetyllysine modification is found at Lys-241. Ser-275 carries the phosphoserine modification. At Thr-330 the chain carries Phosphothreonine. Ser-333 carries the phosphoserine modification. Residues 358-367 (VVEEPVYEAA) show a composition bias toward low complexity. The span at 368–413 (PELEPEPEPDYEPEPETEPDYEDVGELDRQDEDAEGDYEDVLEPED) shows a compositional bias: acidic residues. Residues Tyr-388 and Tyr-405 each carry the phosphotyrosine; by SYK and FES modification. One can recognise an SH3 domain in the interval 429–486 (GAGISAIALYDYQGEGSDELSFDPDDIITDIEMVDEGWWRGQCRGHFGLFPANYVKLL).

Interacts (via SH2 domain) with FGR. Associates with the SH2 and SH3 domains of LCK. Binding to he LCK SH3 domain occurs constitutively, while binding to the LCK SH2 domain occurs only upon TCR stimulation. A similar binding pattern was observed with LYN, but not with FYN in which the FYN SH2 region associates upon TCR stimulation but the FYN SH3 region does not associate regardless of TCR stimulation. Directly associates with HAX1, through binding to its C-terminal region. Interacts with HS1BP3. Interacts with FES/FPS. Forms a multiprotein complex with LYN and ANKRD54. Phosphorylated by LYN, FYN and FGR after cross-linking of surface IgM on B-cells. Phosphorylation by LYN, FYN and FGR requires prior phosphorylation by SYK. Binds to LCK in vivo, and is tyrosine phosphorylated upon TCR stimulation. Phosphorylated by FES. In terms of tissue distribution, expressed only in tissues and cells of hematopoietic origin.

It is found in the mitochondrion. Its function is as follows. Substrate of the antigen receptor-coupled tyrosine kinase. Plays a role in antigen receptor signaling for both clonal expansion and deletion in lymphoid cells. May also be involved in the regulation of gene expression. This is Hematopoietic lineage cell-specific protein (Hcls1) from Mus musculus (Mouse).